Here is a 168-residue protein sequence, read N- to C-terminus: Crossover junction endodeoxyribonuclease RuvC (168 aa).

Active-site residues include Asp-10, Glu-70, and Asp-143. Residues Asp-10, Glu-70, and Asp-143 each coordinate Mg(2+).

The protein belongs to the RuvC family. Homodimer which binds Holliday junction (HJ) DNA. The HJ becomes 2-fold symmetrical on binding to RuvC with unstacked arms; it has a different conformation from HJ DNA in complex with RuvA. In the full resolvosome a probable DNA-RuvA(4)-RuvB(12)-RuvC(2) complex forms which resolves the HJ. Mg(2+) is required as a cofactor.

The protein localises to the cytoplasm. It carries out the reaction Endonucleolytic cleavage at a junction such as a reciprocal single-stranded crossover between two homologous DNA duplexes (Holliday junction).. Functionally, the RuvA-RuvB-RuvC complex processes Holliday junction (HJ) DNA during genetic recombination and DNA repair. Endonuclease that resolves HJ intermediates. Cleaves cruciform DNA by making single-stranded nicks across the HJ at symmetrical positions within the homologous arms, yielding a 5'-phosphate and a 3'-hydroxyl group; requires a central core of homology in the junction. The consensus cleavage sequence is 5'-(A/T)TT(C/G)-3'. Cleavage occurs on the 3'-side of the TT dinucleotide at the point of strand exchange. HJ branch migration catalyzed by RuvA-RuvB allows RuvC to scan DNA until it finds its consensus sequence, where it cleaves and resolves the cruciform DNA. This Roseiflexus sp. (strain RS-1) protein is Crossover junction endodeoxyribonuclease RuvC.